The primary structure comprises 428 residues: Enolase (428 aa).

Residue Gln162 coordinates (2R)-2-phosphoglycerate. Glu204 acts as the Proton donor in catalysis. Positions 241, 282, and 309 each coordinate Mg(2+). Positions 334, 363, 364, and 385 each coordinate (2R)-2-phosphoglycerate. Catalysis depends on Lys334, which acts as the Proton acceptor.

It belongs to the enolase family. It depends on Mg(2+) as a cofactor.

It is found in the cytoplasm. The protein resides in the secreted. Its subcellular location is the cell surface. It catalyses the reaction (2R)-2-phosphoglycerate = phosphoenolpyruvate + H2O. It functions in the pathway carbohydrate degradation; glycolysis; pyruvate from D-glyceraldehyde 3-phosphate: step 4/5. Its function is as follows. Catalyzes the reversible conversion of 2-phosphoglycerate (2-PG) into phosphoenolpyruvate (PEP). It is essential for the degradation of carbohydrates via glycolysis. This Mycobacterium marinum (strain ATCC BAA-535 / M) protein is Enolase.